Consider the following 375-residue polypeptide: Thioredoxin reductase 1, mitochondrial (375 aa).

The transit peptide at 1–37 (MNCVSRLKCLISKARSFARLGGESTLSQPPSLASAAF) directs the protein to the mitochondrion. Residues 58–61 (SGPA), 79–80 (FE), 87–92 (IAPGGQ), asparagine 101, valine 134, cysteine 192, aspartate 337, and 344–346 (RQA) each bind FAD. Cysteines 189 and 192 form a disulfide.

This sequence belongs to the class-II pyridine nucleotide-disulfide oxidoreductase family. In terms of assembly, homodimer. FAD is required as a cofactor. In terms of tissue distribution, ubiquitous.

The protein localises to the cytoplasm. It is found in the mitochondrion. The catalysed reaction is [thioredoxin]-dithiol + NADP(+) = [thioredoxin]-disulfide + NADPH + H(+). Functionally, NADPH-dependent thioredoxin-disulfide reductase that reduces thioredoxins O1, O2 and F3. In Arabidopsis thaliana (Mouse-ear cress), this protein is Thioredoxin reductase 1, mitochondrial (NTR1).